We begin with the raw amino-acid sequence, 531 residues long: Zinc finger C2HC domain-containing protein 1C (531 aa).

Positions 16–45 (MLPHNTTEAPGPHSAKQDSYEQSDSSQQSL) are disordered. Low complexity predominate over residues 35 to 44 (YEQSDSSQQS). Residues 209–264 (VQIRRLEAAGESLEEEIRRKQILLRGKLKKTEEELRRIQTQKEQAKENENRELQKI) are a coiled coil. 2 disordered regions span residues 290 to 318 (FEEEFSRDKREDETWERSQQNSSPFQLSD) and 334 to 387 (NKIR…PQLG). Residues 293–305 (EFSRDKREDETWE) are compositionally biased toward basic and acidic residues. The span at 306 to 315 (RSQQNSSPFQ) shows a compositional bias: polar residues. The span at 335-345 (KIRDRVSEPSM) shows a compositional bias: basic and acidic residues. The span at 366 to 380 (SSLSMAPDSSGSSGS) shows a compositional bias: low complexity. 2 C2HC/C3H-type zinc fingers span residues 385–414 (QLGECSHCGRKFLLFRLERHSNICSRMQGS) and 493–522 (DYIQCPHCSHHFAPKVAEQHIPKCKTIKNR). 8 residues coordinate Zn(2+): Cys-389, Cys-392, His-404, Cys-408, Cys-497, Cys-500, His-512, and Cys-516.

The protein belongs to the ZC2HC1 family. Zn(2+) serves as cofactor.

This is Zinc finger C2HC domain-containing protein 1C (ZC2HC1C) from Macaca fascicularis (Crab-eating macaque).